A 200-amino-acid polypeptide reads, in one-letter code: WASH complex subunit 3 (200 aa).

A coiled-coil region spans residues 56–76 (SLRIQQIETTLSILEAKLASI). 2 disordered regions span residues 87–130 (VRAP…AENI) and 165–200 (DPNL…SFSD).

This sequence belongs to the CCDC53 family. As to quaternary structure, component of the WASH complex.

This chain is WASH complex subunit 3, found in Danio rerio (Zebrafish).